An 895-amino-acid polypeptide reads, in one-letter code: Serine/threonine-protein kinase-like protein ACR4 (895 aa).

The first 29 residues, 1-29, serve as a signal peptide directing secretion; it reads MRMFETRAREWILLVKLVLFTSIWQLASA. Residues 30–434 lie on the Extracellular side of the membrane; it reads LGSMSSIAIS…FWSLQLPIAT (405 aa). A run of 7 repeats spans residues 38–73, 77–112, 130–167, 169–202, 210–245, 262–296, and 301–339. The segment at 38 to 339 is 7 X 36 AA repeats; the sequence is ISYGEGGSVF…PASIPLAVSP (302 aa). Residues asparagine 158 and asparagine 196 are each glycosylated (N-linked (GlcNAc...) asparagine). The N-linked (GlcNAc...) asparagine glycan is linked to asparagine 290. One copy of the TNFR-Cys repeat lies at 346 to 395; that stretch reads PCPPGTHELSNQENSPCKFTGSHICLPCSTSCPPGMYQKSVCTERSDQVC. Intrachain disulfides connect cysteine 347/cysteine 370, cysteine 373/cysteine 387, and cysteine 377/cysteine 395. N-linked (GlcNAc...) asparagine glycans are attached at residues asparagine 398 and asparagine 410. A helical membrane pass occupies residues 435–455; sequence AEIGFALFLVAVVSITAALYI. Residues 456–895 lie on the Cytoplasmic side of the membrane; it reads RYRLRNCRCS…GQSLFLHHNF (440 aa). Serine 475 carries the post-translational modification Phosphoserine. The Protein kinase domain maps to 512–789; it reads FKEESIVGKG…KVTTALERAL (278 aa). Residues 518 to 526 and lysine 540 each bind ATP; that span reads VGKGSFSCV. The active-site Proton acceptor is aspartate 641. The segment at 818 to 895 is disordered; it reads SWRIGSKRSG…GQSLFLHHNF (78 aa). Residues 865 to 877 show a composition bias toward basic and acidic residues; that stretch reads EGRKQQEALRSLE.

Belongs to the protein kinase superfamily. Ser/Thr protein kinase family. Homodimer. Interacts with PP2A3. In terms of processing, autophosphorylated and phosphorylated by ALE2. As to expression, expressed in seedlings, floral buds, siliques, leaves, shoot apical meristems (SAM), and, to a lower extent, in roots.

It is found in the cell membrane. The protein resides in the endosome. Its subcellular location is the multivesicular body membrane. It catalyses the reaction L-seryl-[protein] + ATP = O-phospho-L-seryl-[protein] + ADP + H(+). The catalysed reaction is L-threonyl-[protein] + ATP = O-phospho-L-threonyl-[protein] + ADP + H(+). Its function is as follows. Controls formative cell division in meristems, including root tips and lateral root initiation zones of the pericycle, in response to CLE40 signal. Acts with CLE40p peptide as a ligand-receptor pair in a signal transduction pathway, coordinating movement of the root tip and organization of cell divisions in the root meristem. Required during embryogenesis and development, probably for the differentiation of protoderm and epidermal cells. Involved in the regulation of cellular organization during the development of sepal margins and ovule integument outgrowth and promotes giant cell formation. Can phosphorylate ALE2. The protein is Serine/threonine-protein kinase-like protein ACR4 of Arabidopsis thaliana (Mouse-ear cress).